We begin with the raw amino-acid sequence, 532 residues long: Small ribosomal subunit protein uS2cz (532 aa).

The interval 1–271 is N-terminal extension; it reads METLEKNFKK…SPISSKEKKA (271 aa). TRAM domains follow at residues 38–97, 127–186, and 197–260; these read ALQA…SILN, DFKV…KPIL, and NQMI…KILK.

The protein belongs to the universal ribosomal protein uS2 family.

The protein localises to the plastid. It is found in the chloroplast. This chain is Small ribosomal subunit protein uS2cz (rps2-1), found in Tetradesmus obliquus (Green alga).